We begin with the raw amino-acid sequence, 278 residues long: MAIRKYKPTTPGRRGASVSDFAEITRSTPEKSLVRPLHGKGGRNAHGRITTRHKGGGHKRAYRVIDFRRHDKDGVDAKVAHIEYDPNRTANIALLHYLDGEKRYIIAPYGLKQGAIVESGANADIKPGNNLPLRNIPAGTVIHAVELRPGGGAKLARSAGVSIQLLGKEGSYASLRMPSGEIRRVDVRCRATVGEVGNAEQANINWGKAGRMRWKGKRPTVRGVVMNPVDHPHGGGEGKTSGGRHPVSPWGKPEGRTRKPNKPSDKLIVRRRRTGKKR.

2 disordered regions span residues 27–58 (STPE…GGGH) and 224–278 (VVMN…GKKR). Over residues 37–58 (LHGKGGRNAHGRITTRHKGGGH) the composition is skewed to basic residues. Basic and acidic residues predominate over residues 253-268 (PEGRTRKPNKPSDKLI). Basic residues predominate over residues 269 to 278 (VRRRRTGKKR).

The protein belongs to the universal ribosomal protein uL2 family. As to quaternary structure, part of the 50S ribosomal subunit. Forms a bridge to the 30S subunit in the 70S ribosome.

In terms of biological role, one of the primary rRNA binding proteins. Required for association of the 30S and 50S subunits to form the 70S ribosome, for tRNA binding and peptide bond formation. It has been suggested to have peptidyltransferase activity; this is somewhat controversial. Makes several contacts with the 16S rRNA in the 70S ribosome. This chain is Large ribosomal subunit protein uL2, found in Mycobacterium sp. (strain KMS).